A 459-amino-acid chain; its full sequence is Probable D-serine dehydratase (459 aa).

N6-(pyridoxal phosphate)lysine is present on Lys-119.

Belongs to the serine/threonine dehydratase family. DsdA subfamily. The cofactor is pyridoxal 5'-phosphate.

The catalysed reaction is D-serine = pyruvate + NH4(+). This Geobacillus stearothermophilus (Bacillus stearothermophilus) protein is Probable D-serine dehydratase.